Consider the following 1690-residue polypeptide: Restin homolog (1690 aa).

2 stretches are compositionally biased toward polar residues: residues 1–11 (MSDDTSASGGT) and 39–51 (NIPT…TGIP). The tract at residues 1 to 105 (MSDDTSASGG…ESDDNLSSIN (105 aa)) is disordered. A phosphoserine mark is found at S64 and S67. One can recognise a CAP-Gly 1 domain in the interval 143–185 (GDTHFAAGEWAGVVLDEPNGKNDGCVSGKRYFQCEPKRGIFSR). The tract at residues 195–227 (AGAQTPTSPLAKSSPDRSRTVSPTASIRSSMLR) is disordered. Polar residues predominate over residues 214 to 226 (TVSPTASIRSSML). A Phosphoserine modification is found at S216. The 43-residue stretch at 260–302 (GETQFAPGNWCGVELDEPSGKNDGTVDDIRYFECKPKYGVFVP) folds into the CAP-Gly 2 domain. S309, S322, and S325 each carry phosphoserine. T327 carries the phosphothreonine modification. S328 carries the phosphoserine modification. T362 carries the phosphothreonine modification. Coiled coils occupy residues 378-468 (QHVE…VSAT), 484-660 (GALQ…DMLR), 667-916 (EEKS…TKLK), 926-981 (LSSC…ELQA), 1001-1121 (ATGH…EAIQ), 1158-1549 (EADM…AQMN), and 1565-1600 (DIET…LETL). Residues 843–905 (QQAAASGEEG…GSLEEEAKKS (63 aa)) form a disordered region. Residues 865–885 (QLKSQAEETQSELKSTQSNLE) show a composition bias toward polar residues. Disordered regions lie at residues 1031–1052 (QLQD…KEKS) and 1400–1419 (KLDE…NEIQ). Basic and acidic residues-rich tracts occupy residues 1040-1052 (TKLK…KEKS) and 1410-1419 (SQKKSHNEIQ). Residues 1635-1665 (TEDCPIQGSEDQDYSTPSSESNNNEKERKLP) form a disordered region. T1681 is modified (phosphothreonine). Phosphoserine is present on S1682.

In terms of assembly, interacts with Lva. In terms of tissue distribution, specifically expressed at the tip of the furrow in cellularizing blastoderms. CLIP-190 and jar are coexpressed at several times in development and in a number of tissues, including embryonic axonal neuron processes and posterior pole.

The protein resides in the cytoplasm. It localises to the cytoskeleton. It is found in the golgi apparatus. The protein localises to the microtubule organizing center. Its subcellular location is the perinuclear region. In terms of biological role, together CLIP-190 and jar may coordinate the interaction between the actin and microtubule cytoskeleton. May link endocytic vesicles to microtubules. May play a role in formation of furrows during cellularization. This Drosophila melanogaster (Fruit fly) protein is Restin homolog (CLIP-190).